The sequence spans 354 residues: Methionine import ATP-binding protein MetN (354 aa).

The region spanning 8–250 (LDHIDITFRQ…PKEALTQEFI (243 aa)) is the ABC transporter domain. ATP is bound at residue 42 to 49 (GYSGAGKS).

The protein belongs to the ABC transporter superfamily. Methionine importer (TC 3.A.1.24) family. The complex is composed of two ATP-binding proteins (MetN), two transmembrane proteins (MetI) and a solute-binding protein (MetQ).

Its subcellular location is the cell membrane. The catalysed reaction is L-methionine(out) + ATP + H2O = L-methionine(in) + ADP + phosphate + H(+). The enzyme catalyses D-methionine(out) + ATP + H2O = D-methionine(in) + ADP + phosphate + H(+). Its function is as follows. Part of the ABC transporter complex MetNIQ involved in methionine import. Responsible for energy coupling to the transport system. The sequence is that of Methionine import ATP-binding protein MetN from Streptococcus pyogenes serotype M1.